We begin with the raw amino-acid sequence, 103 residues long: Defensin-like protein 290 (103 aa).

An N-terminal signal peptide occupies residues 1–29; sequence MTALRRTISIIFVFYLSCTLFVNIFGVQA. 6 disulfide bridges follow: cysteine 33–cysteine 50, cysteine 39–cysteine 55, cysteine 43–cysteine 57, cysteine 72–cysteine 92, cysteine 78–cysteine 98, and cysteine 84–cysteine 100.

This sequence belongs to the DEFL family.

It localises to the secreted. The chain is Defensin-like protein 290 from Arabidopsis thaliana (Mouse-ear cress).